The following is a 632-amino-acid chain: Arginyl-tRNA--protein transferase 1 (632 aa).

The span at 1 to 18 (MSLKNDASSSHDGGSNRE) shows a compositional bias: polar residues. Disordered regions lie at residues 1–27 (MSLK…HGRR), 113–144 (KLDV…AKSE), 284–312 (NGNI…HQAR), and 517–580 (PAAS…NDIN). Positions 113–122 (KLDVQPREQR) are enriched in basic and acidic residues. The segment covering 285 to 296 (GNISRGANSLDG) has biased composition (polar residues). Basic and acidic residues predominate over residues 298–310 (ETLHAKKDSENHQ). Residues 538–563 (SDEDEDEDEDDDDDDDDDEEMYETES) show a composition bias toward acidic residues. Basic and acidic residues predominate over residues 564–578 (EDSHIESDPGSKDND).

The protein belongs to the R-transferase family.

The catalysed reaction is an N-terminal L-alpha-aminoacyl-[protein] + L-arginyl-tRNA(Arg) = an N-terminal L-arginyl-L-aminoacyl-[protein] + tRNA(Arg) + H(+). Involved in the post-translational conjugation of arginine to the N-terminal aspartate or glutamate of a protein. This arginylation is required for degradation of the protein via the ubiquitin pathway. Component of the N-end rule pathway with ATE2 and PRT6. The N-end rule pathway regulates seed after-ripening, seedling sugar sensitivity, seedling lipid breakdown, and abscisic acid (ABA) sensitivity of germination. The end-rule pathway regulates various aspects of leaf and shoot development. Involved in the oxygen-dependent N-arginylation of RAP2-12, an activator of hypoxic gene expression. This N-terminal modification leads to ubiquitination by PRT6 and subsequent degradation of RAP2-12 under aerobic conditions. Has an important role in the progression of leaf senescence. Involved in disease resistance. The end-rule pathway plays a role in regulating the timing and amplitude of the immune response following infection with the bacterial pathogen Pseudomonas syringae pv tomato. Regulates the biosynthesis of plant-defense metabolites such as glucosinolates, and the biosynthesis and response to the phytohormone jasmonate (JA), which plays a key role in plant immunity. The protein is Arginyl-tRNA--protein transferase 1 of Arabidopsis thaliana (Mouse-ear cress).